Here is a 147-residue protein sequence, read N- to C-terminus: Male-specific protein scotti (147 aa).

A disordered region spans residues 55-93; the sequence is PQEPPLGVFPAQGGPNGPPRRRKKRSFYTMTKPTPPCQS. The span at 82–93 shows a compositional bias: polar residues; that stretch reads YTMTKPTPPCQS. Asn128 is a glycosylation site (N-linked (GlcNAc...) asparagine).

Belongs to the male-specific scotti family. As to expression, expressed in primary spermatocytes and round spermatids. Low expression is seen in very short elongating cysts, but were detected at high levels in a few longer spermatid cysts.

In terms of biological role, post-meiotically transcribed gene that has a role in late spermiogenesis; required for actin cone progression during spermatid individualization. This Drosophila melanogaster (Fruit fly) protein is Male-specific protein scotti.